Consider the following 204-residue polypeptide: HAUS augmin-like complex subunit 2 (204 aa).

The stretch at 54–84 forms a coiled coil; it reads LAQKCHTLQSMNNHLEAVLKEKRSLRQRLLK.

This sequence belongs to the HAUS2 family. In terms of assembly, component of the HAUS augmin-like complex. The complex interacts with the gamma-tubulin ring complex and this interaction is required for spindle assembly. Interacts with EML3 (phosphorylated form).

It localises to the cytoplasm. Its subcellular location is the cytoskeleton. The protein resides in the microtubule organizing center. The protein localises to the centrosome. It is found in the spindle. The sequence is that of HAUS augmin-like complex subunit 2 (HAUS2) from Pongo abelii (Sumatran orangutan).